Consider the following 502-residue polypeptide: ATP synthase subunit alpha (502 aa).

169 to 176 (GDRQTGKT) contacts ATP.

Belongs to the ATPase alpha/beta chains family. F-type ATPases have 2 components, CF(1) - the catalytic core - and CF(0) - the membrane proton channel. CF(1) has five subunits: alpha(3), beta(3), gamma(1), delta(1), epsilon(1). CF(0) has three main subunits: a(1), b(2) and c(9-12). The alpha and beta chains form an alternating ring which encloses part of the gamma chain. CF(1) is attached to CF(0) by a central stalk formed by the gamma and epsilon chains, while a peripheral stalk is formed by the delta and b chains.

The protein localises to the cell inner membrane. It catalyses the reaction ATP + H2O + 4 H(+)(in) = ADP + phosphate + 5 H(+)(out). Produces ATP from ADP in the presence of a proton gradient across the membrane. The alpha chain is a regulatory subunit. The sequence is that of ATP synthase subunit alpha from Geotalea daltonii (strain DSM 22248 / JCM 15807 / FRC-32) (Geobacter daltonii).